Reading from the N-terminus, the 482-residue chain is tRNA sulfurtransferase (482 aa).

The THUMP domain occupies 61–165 (LAIRDALTRI…DDRLLLIKGR (105 aa)). Residues 183-184 (LI), K265, G287, and Q296 each bind ATP. A disulfide bond links C344 and C456. Residues 404-482 (FGPNDVILDI…GFNNVKVYRP (79 aa)) enclose the Rhodanese domain. The active-site Cysteine persulfide intermediate is C456.

It belongs to the ThiI family.

The protein localises to the cytoplasm. The enzyme catalyses [ThiI sulfur-carrier protein]-S-sulfanyl-L-cysteine + a uridine in tRNA + 2 reduced [2Fe-2S]-[ferredoxin] + ATP + H(+) = [ThiI sulfur-carrier protein]-L-cysteine + a 4-thiouridine in tRNA + 2 oxidized [2Fe-2S]-[ferredoxin] + AMP + diphosphate. The catalysed reaction is [ThiS sulfur-carrier protein]-C-terminal Gly-Gly-AMP + S-sulfanyl-L-cysteinyl-[cysteine desulfurase] + AH2 = [ThiS sulfur-carrier protein]-C-terminal-Gly-aminoethanethioate + L-cysteinyl-[cysteine desulfurase] + A + AMP + 2 H(+). Its pathway is cofactor biosynthesis; thiamine diphosphate biosynthesis. Catalyzes the ATP-dependent transfer of a sulfur to tRNA to produce 4-thiouridine in position 8 of tRNAs, which functions as a near-UV photosensor. Also catalyzes the transfer of sulfur to the sulfur carrier protein ThiS, forming ThiS-thiocarboxylate. This is a step in the synthesis of thiazole, in the thiamine biosynthesis pathway. The sulfur is donated as persulfide by IscS. The chain is tRNA sulfurtransferase from Escherichia coli (strain 55989 / EAEC).